The following is a 204-amino-acid chain: Demethylsterigmatocystin 6-O-methyltransferase stcP (204 aa).

Residues 48-49 (GG), Asp73, 93-94 (DF), and Arg109 contribute to the S-adenosyl-L-methionine site. The active-site Proton acceptor is the His113.

It belongs to the class I-like SAM-binding methyltransferase superfamily. Cation-independent O-methyltransferase family.

The enzyme catalyses 6-demethylsterigmatocystin + S-adenosyl-L-methionine = sterigmatocystin + S-adenosyl-L-homocysteine + H(+). It participates in mycotoxin biosynthesis; sterigmatocystin biosynthesis. Its function is as follows. Norsolorinic acid reductase; part of the gene cluster that mediates the biosynthesis of sterigmatocystin (ST), a polyketide-derived furanocoumarin which is part of the most toxic and carcinogenic compounds among the known mycotoxins. The first step in the biosynthesis of sterigmatocystin is the production of hexanoate by the fatty acid synthase (FAS) units stcJ and stcK. The polyketide backbone is assembled by the non-reducing polyketide synthase stcA by condensation of the starter hexanoyl-CoA and 7 malonyl-CoA extender units followed by cyclization and release of norsolorinic acid. Norsolorinic acid is the first stable intermediate in the biosynthesis of sterigmatocystin and is converted into averantin (AVN) by the ketoreductase stcE which reduces the hexanoate ketone to an alcohol. Averantin is then oxidized into 5'-hydroxyaverantin (HAVN) by the cytochrome P450 monooxygenase stcF. 5'-hydroxyaverantin is further converted to 5'-oxyaverantin (OAVN) by the 5'-hydroxyaverantin dehydrogenase stcG. The next step is the conversion of OAVN into averufin (AVF) which is catalyzed by a yet to be identified enzyme. The cytochrome P450 monooxygenase stcB and the flavin-binding monooxygenase stcW are both required for the conversion of averufin to 1-hydroxyversicolorone. The esterase stcI probably catalyzes the formation of versiconal hemiacetal acetate from 1-hydroxyversicolorone. The oxydoreductase stcN then probably catalyzes the biosynthetic step from versiconal to versicolorin B (VERB). The next step is performed by the versicolorin B desaturase stcL to produce versicolorin A (VERA). The ketoreductase stcU and the cytochrome P450 monooxygenase stcS are involved in the conversion of versicolorin A to demethylsterigmatocystin. The Baeyer-Villiger oxidas stcQ and the reductase stcR might be involved in the biosynthetic step from versicolorin A to demethylsterigmatocystin. The final step in the biosynthesis of sterigmatocystin is the methylation of demethylsterigmatocystin catalyzed by the methyltransferase stcP. This is Demethylsterigmatocystin 6-O-methyltransferase stcP from Emericella nidulans (strain FGSC A4 / ATCC 38163 / CBS 112.46 / NRRL 194 / M139) (Aspergillus nidulans).